The sequence spans 212 residues: uncharacterized protein (212 aa).

S-adenosyl-L-methionine is bound by residues G53, E74, and D97.

The protein belongs to the methyltransferase superfamily. YrrT family.

Its function is as follows. Could be a S-adenosyl-L-methionine-dependent methyltransferase. This is an uncharacterized protein from Bacillus cereus (strain 03BB102).